A 255-amino-acid chain; its full sequence is Mediator of RNA polymerase II transcription subunit 18 (255 aa).

This sequence belongs to the Mediator complex subunit 18 family. In terms of assembly, component of the Mediator complex.

The protein localises to the nucleus. Component of the Mediator complex, a coactivator involved in the regulated transcription of nearly all RNA polymerase II-dependent genes. Mediator functions as a bridge to convey information from gene-specific regulatory proteins to the basal RNA polymerase II transcription machinery. Mediator is recruited to promoters by direct interactions with regulatory proteins and serves as a scaffold for the assembly of a functional preinitiation complex with RNA polymerase II and the general transcription factors. This Kluyveromyces lactis (strain ATCC 8585 / CBS 2359 / DSM 70799 / NBRC 1267 / NRRL Y-1140 / WM37) (Yeast) protein is Mediator of RNA polymerase II transcription subunit 18 (SRB5).